A 119-amino-acid polypeptide reads, in one-letter code: Ribonuclease P protein component (119 aa).

This sequence belongs to the RnpA family. Consists of a catalytic RNA component (M1 or rnpB) and a protein subunit.

It catalyses the reaction Endonucleolytic cleavage of RNA, removing 5'-extranucleotides from tRNA precursor.. Functionally, RNaseP catalyzes the removal of the 5'-leader sequence from pre-tRNA to produce the mature 5'-terminus. It can also cleave other RNA substrates such as 4.5S RNA. The protein component plays an auxiliary but essential role in vivo by binding to the 5'-leader sequence and broadening the substrate specificity of the ribozyme. The chain is Ribonuclease P protein component from Yersinia pseudotuberculosis serotype O:1b (strain IP 31758).